A 336-amino-acid chain; its full sequence is MAESLRERGAEVVFFGSESGLERELVPKAGFGLHALPLSGLAGGPASRARASLLFARAVVRCRALLRELRPGAVLGVGGYASAPAVAAARLLGIPTFIHEQNSVPGKVNRAAGRFAREVLVAFPDAARRFGRAVRAAHVGMPTRRQFFSASREEALRRLGLEPPVVLVFGGSGGALRINLAAAEAFRGQTPYSVVQISGRRDFPRLSSDNPRHRILEYAEDIWHHVTAADVVVIRGGAGSLFDVAAVGRAAIVVPYPHHRDNQQLLNARYFTERGAAELLPDHEVDAKTLRGRVEELLGDGERRLRMASSMRSLATPRAAEEVAERMLAAGREGTG.

The UDP-N-acetyl-alpha-D-glucosamine site is built by asparagine 102, arginine 144, serine 172, and glutamine 264.

The protein belongs to the glycosyltransferase 28 family. MurG subfamily.

Its subcellular location is the cell membrane. The enzyme catalyses di-trans,octa-cis-undecaprenyl diphospho-N-acetyl-alpha-D-muramoyl-L-alanyl-D-glutamyl-meso-2,6-diaminopimeloyl-D-alanyl-D-alanine + UDP-N-acetyl-alpha-D-glucosamine = di-trans,octa-cis-undecaprenyl diphospho-[N-acetyl-alpha-D-glucosaminyl-(1-&gt;4)]-N-acetyl-alpha-D-muramoyl-L-alanyl-D-glutamyl-meso-2,6-diaminopimeloyl-D-alanyl-D-alanine + UDP + H(+). The protein operates within cell wall biogenesis; peptidoglycan biosynthesis. Its function is as follows. Cell wall formation. Catalyzes the transfer of a GlcNAc subunit on undecaprenyl-pyrophosphoryl-MurNAc-pentapeptide (lipid intermediate I) to form undecaprenyl-pyrophosphoryl-MurNAc-(pentapeptide)GlcNAc (lipid intermediate II). The protein is UDP-N-acetylglucosamine--N-acetylmuramyl-(pentapeptide) pyrophosphoryl-undecaprenol N-acetylglucosamine transferase of Rubrobacter xylanophilus (strain DSM 9941 / JCM 11954 / NBRC 16129 / PRD-1).